Here is a 157-residue protein sequence, read N- to C-terminus: Putative gamma-glutamylcyclotransferase CG2811 (157 aa).

14–17 (YGTL) serves as a coordination point for substrate. The active-site Proton acceptor is glutamate 89.

It belongs to the gamma-glutamylcyclotransferase family.

Putative gamma-glutamylcyclotransferase. In Drosophila melanogaster (Fruit fly), this protein is Putative gamma-glutamylcyclotransferase CG2811.